The sequence spans 185 residues: Ribosome-recycling factor (185 aa).

The protein belongs to the RRF family.

Its subcellular location is the cytoplasm. In terms of biological role, responsible for the release of ribosomes from messenger RNA at the termination of protein biosynthesis. May increase the efficiency of translation by recycling ribosomes from one round of translation to another. The protein is Ribosome-recycling factor of Shewanella denitrificans (strain OS217 / ATCC BAA-1090 / DSM 15013).